We begin with the raw amino-acid sequence, 550 residues long: MLKNINPTETQAWADLTAHFETAQNFNLADLFSADAQRFDKFSTTFGQDILVDFSKNLVTEETMQKLFSLAEQTELSEAIKAMFSGEKINKTEDRSVLHTALRNRSNTPVIVDGEDVMPAVNAVLEKMKAFTERLISGEWKGYTGKEITDIVNIGIGGSDLGPYMVSEALAPYKTRLNMHFVSNVDGTHIVETLKPLNPETTLFLIASKTFTTQETMTNAHSARDWFLAEAGDQAHVAKHFAALSTNAESVSEFGIDTDNMFEFWDWVGGRYSLWSAIGLSIALAVGFDNFVELLEGAHEVDNHFANTELENNVPVILALIGLWYNNFHGSESESILPYDQYLHRFAAYFQQGNMESNGKCVDRNGNPVDYQTGPIIWGEPGTNGQHAFYQLIHQGTKLIPCDFIAPAISHNQVGDHHQKLMSNFFAQTEALAFGKKEETVRAEFAAAGKTEAEMAELVAFKVFEGNRPTNSILVKKVTPKTLGNLIAMYEHKIFVQGVIWNIFSFDQWGVELGKQLANQILPELADDKAINSHDSSTNGLINAFKAFKA.

The Proton donor role is filled by Glu-356. Active-site residues include His-387 and Lys-515.

The protein belongs to the GPI family.

It is found in the cytoplasm. It carries out the reaction alpha-D-glucose 6-phosphate = beta-D-fructose 6-phosphate. It functions in the pathway carbohydrate biosynthesis; gluconeogenesis. Its pathway is carbohydrate degradation; glycolysis; D-glyceraldehyde 3-phosphate and glycerone phosphate from D-glucose: step 2/4. Its function is as follows. Catalyzes the reversible isomerization of glucose-6-phosphate to fructose-6-phosphate. This chain is Glucose-6-phosphate isomerase, found in Aliivibrio salmonicida (strain LFI1238) (Vibrio salmonicida (strain LFI1238)).